The following is a 419-amino-acid chain: E3 ubiquitin-protein ligase RNFT1 (419 aa).

The interval 1–120 is disordered; sequence MKLRAQFDRG…SGESDLESGE (120 aa). Composition is skewed to polar residues over residues 31–44 and 72–82; these read EPSS…SLTL and GSSSGSTNGRG. Residues 84–102 show a composition bias toward basic residues; that stretch reads TSRRMRTASHSHSHTHGHG. Helical transmembrane passes span 141–161, 187–207, 217–237, 240–260, 270–290, and 303–323; these read FIVI…AVAV, LHCA…FYTF, FFAN…SVGV, FILK…PCPL, YMLI…PLWF, and VGLT…LLAL. The interval 352–403 is required for ubiquitin ligase activity and for protection against ER stress-induced cell death; the sequence is IREAGDICPICQADFKQPRVLVCQHIFCEECIAQWLNQERTCPLCRTVITDK. Residues 359 to 397 form an RING-type zinc finger; sequence CPICQADFKQPRVLVCQHIFCEECIAQWLNQERTCPLCR.

It is found in the endoplasmic reticulum membrane. The enzyme catalyses S-ubiquitinyl-[E2 ubiquitin-conjugating enzyme]-L-cysteine + [acceptor protein]-L-lysine = [E2 ubiquitin-conjugating enzyme]-L-cysteine + N(6)-ubiquitinyl-[acceptor protein]-L-lysine.. The protein operates within protein modification; protein ubiquitination. In terms of biological role, E3 ubiquitin-protein ligase that acts in the endoplasmic reticulum (ER)-associated degradation (ERAD) pathway, which targets misfolded proteins that accumulate in the endoplasmic reticulum (ER) for ubiquitination and subsequent proteasome-mediated degradation. Protects cells from ER stress-induced apoptosis. This Danio rerio (Zebrafish) protein is E3 ubiquitin-protein ligase RNFT1 (rnft1).